Consider the following 514-residue polypeptide: Contact site A protein (514 aa).

The signal sequence occupies residues Met-1 to Ser-19. The segment at Ala-20–Ile-453 is globular. Residues Pro-21–Thr-104 form the IPT/TIG 1 domain. N-linked (GlcNAc...) asparagine glycosylation is found at Asn-128, Asn-137, Asn-207, Asn-294, and Asn-399. The IPT/TIG 2 domain occupies Pro-191–Asn-283. 2 stretches are compositionally biased toward low complexity: residues Thr-446–Pro-475 and Ser-483–Ala-494. The disordered stretch occupies residues Thr-446–Ala-494. 2 consecutive repeat copies span residues Thr-462 to Pro-469 and Thr-472 to Pro-479. The segment at Thr-462–Pro-479 is 2 X 8 AA repeats, Pro-rich. Ser-492 carries GPI-like-anchor amidated serine lipidation. The propeptide at Ser-493 to Ile-514 is removed in mature form.

In terms of processing, phosphorylated on serine and N-glycosylated with two types of oligosaccharide chains. The GPI-like-anchor contains a phosphoceramide group, rather than a phosphatidyl group.

Its subcellular location is the cell membrane. This cell-surface glycoprotein mediates cell-cell binding via homophilic interaction. The sequence is that of Contact site A protein (csaA) from Dictyostelium discoideum (Social amoeba).